The chain runs to 1321 residues: Bile salt export pump (1321 aa).

Topologically, residues 1-62 (MSDSVILRSV…FSSWTDIWLM (62 aa)) are cytoplasmic. One can recognise an ABC transmembrane type-1 1 domain in the interval 62 to 385 (MCMGSLCACI…ASPCLEAFAA (324 aa)). Residues 63–83 (CMGSLCACIHGIAQPGVLLIF) traverse the membrane as a helical segment. At 84–147 (GTMTDVFIDY…MIRFAGYYAG (64 aa)) the chain is on the extracellular side. 4 N-linked (GlcNAc...) asparagine glycosylation sites follow: N109, N116, N122, and N125. Residues 148 to 168 (IGIAVLTTGYIQICFWGIAAA) form a helical membrane-spanning segment. Over 169-215 (HQIQKMRKSYFRKIMRMGIGWVDCNSVGKLNTPFSVDFNKINDSSAD) the chain is Cytoplasmic. Residues 216–236 (QLAIFIQGMTSPIFGFLVGFS) form a helical membrane-spanning segment. The Extracellular segment spans residues 237-240 (QWWK). The helical transmembrane segment at 241-261 (LTLVIISVSPLIGLGAAIIGL) threads the bilayer. Over 262–319 (SVSKFTDYELKAYAKAGSVADEVISSMRTVAAFGGEKKEVERYEKNLVFAQRWGIRKG) the chain is Cytoplasmic. The helical transmembrane segment at 320 to 340 (IVMGFFTGYMWCLIFFCYALA) threads the bilayer. Over 341-353 (FWYGSKLVLEEGE) the chain is Extracellular. Residues 354 to 374 (YSPGALVQIFLSVIIGALNLG) traverse the membrane as a helical segment. Over 375–755 (NASPCLEAFA…KLNAPEWPYM (381 aa)) the chain is Cytoplasmic. Residues 420–656 (IEFHNVTFHY…KGVYFALVTL (237 aa)) enclose the ABC transporter 1 domain. 455–462 (GPSGAGKS) is a binding site for ATP. Residue T586 is modified to Phosphothreonine. The residue at position 587 (S587) is a Phosphoserine. Residues 651–672 (FALVTLQSQRNQGDQEENEKDA) are interaction with HAX1. The disordered stretch occupies residues 659–735 (QRNQGDQEEN…KDKDLPAQED (77 aa)). Acidic residues predominate over residues 664 to 677 (DQEENEKDATEDDI). Phosphoserine is present on residues S690, S701, and S704. Basic and acidic residues predominate over residues 714-731 (VEDHKSTHEEDRKDKDLP). The ABC transmembrane type-1 2 domain maps to 755–1043 (MLLGSMGAAV…ASSYTPSYAK (289 aa)). The chain crosses the membrane as a helical span at residues 756 to 776 (LLGSMGAAVNGAVTPLYAFLF). The Extracellular segment spans residues 777–794 (SQILGTFSLPDKEEQRSQ). The helical transmembrane segment at 795 to 815 (INGICLLFVTLGCVSFFTQFL) threads the bilayer. The Cytoplasmic segment spans residues 816-869 (QGYTFAKSGELLTKRLRKFGFRAMLGQDIGWFDDLRNSPGALTTRLATDASQVQ). Transmembrane regions (helical) follow at residues 870-890 (GATG…TVAM) and 891-911 (IIAF…FPFL). Over 912 to 979 (ALSGALQTKM…PYKMAIKKAN (68 aa)) the chain is Cytoplasmic. The chain crosses the membrane as a helical span at residues 980–1000 (VYGLCFGFSQCITFIANSASY). Residues 1001 to 1011 (RYGGYLISNEG) lie on the Extracellular side of the membrane. The helical transmembrane segment at 1012 to 1032 (LHFSYVFRVISAVVLSATALG) threads the bilayer. Topologically, residues 1033–1321 (RASSYTPSYA…KLVTTGSPIS (289 aa)) are cytoplasmic. Residues 1078–1316 (IDFVDCKFTY…KGAYYKLVTT (239 aa)) enclose the ABC transporter 2 domain. An ATP-binding site is contributed by 1113 to 1120 (GSSGCGKS). 2 positions are modified to phosphoserine: S1214 and S1321.

It belongs to the ABC transporter superfamily. ABCB family. Multidrug resistance exporter (TC 3.A.1.201) subfamily. In terms of assembly, interacts with HAX1. Interacts with the adapter protein complex 2 (AP-2) throught AP2A2 or AP2A1; this interaction regulates cell membrane expression of ABCB11 through its internalization in a clathrin-dependent manner and its subsequent degradation. N-glycosylated. In terms of processing, ubiquitinated; short-chain ubiquitination regulates cell-Surface expression of ABCB11. Expressed predominantly, if not exclusively in the liver, where it was further localized to the canalicular microvilli and to subcanalicular vesicles of the hepatocytes by in situ.

The protein localises to the apical cell membrane. It localises to the recycling endosome membrane. The protein resides in the endosome. It is found in the cell membrane. The catalysed reaction is cholate(in) + ATP + H2O = cholate(out) + ADP + phosphate + H(+). It catalyses the reaction taurocholate(in) + ATP + H2O = taurocholate(out) + ADP + phosphate + H(+). It carries out the reaction glycocholate(in) + ATP + H2O = glycocholate(out) + ADP + phosphate + H(+). The enzyme catalyses glycochenodeoxycholate(in) + ATP + H2O = glycochenodeoxycholate(out) + ADP + phosphate + H(+). The catalysed reaction is taurochenodeoxycholate(in) + ATP + H2O = taurochenodeoxycholate(out) + ADP + phosphate + H(+). It catalyses the reaction glycoursodeoxycholate(in) + ATP + H2O = glycoursodeoxycholate(out) + ADP + phosphate + H(+). It carries out the reaction tauroursodeoxycholate(in) + ATP + H2O = tauroursodeoxycholate(out) + ADP + phosphate + H(+). The enzyme catalyses taurodeoxycholate(in) + ATP + H2O = taurodeoxycholate(out) + ADP + phosphate + H(+). The catalysed reaction is taurolithocholate 3-sulfate(in) + ATP + H2O = taurolithocholate 3-sulfate(out) + ADP + phosphate + H(+). It catalyses the reaction pravastatin(in) + ATP + H2O = pravastatin(out) + ADP + phosphate + H(+). Its activity is regulated as follows. The uptake of taurocholate is inhibited by taurolithocholate sulfate with an IC(50) of 9 uM. Pravastatin competitively inhibits the transport of taurocholic acid. Cyclosporin A, glibenclamide, rifampicin and troglitazonestrongly competitively inhibit the transport activity of taurocholate. The canalicular transport activity of taurocholate is strongly dependent on canalicular membrane cholesterol content. The uptake of taurocholate is increased by short- and medium-chain fatty acids. Cholesterol increases transport capacity of taurocholate without affecting the affinity for the substrate. In terms of biological role, catalyzes the transport of the major hydrophobic bile salts, such as taurine and glycine-conjugated cholic acid across the canalicular membrane of hepatocytes in an ATP-dependent manner, therefore participates in hepatic bile acid homeostasis and consequently to lipid homeostasis through regulation of biliary lipid secretion in a bile salts dependent manner. Transports taurine-conjugated bile salts more rapidly than glycine-conjugated bile salts. Also transports non-bile acid compounds, such as pravastatin and fexofenadine in an ATP-dependent manner and may be involved in their biliary excretion. The protein is Bile salt export pump of Oryctolagus cuniculus (Rabbit).